The chain runs to 236 residues: 2-C-methyl-D-erythritol 4-phosphate cytidylyltransferase (236 aa).

This sequence belongs to the IspD/TarI cytidylyltransferase family. IspD subfamily.

The enzyme catalyses 2-C-methyl-D-erythritol 4-phosphate + CTP + H(+) = 4-CDP-2-C-methyl-D-erythritol + diphosphate. It participates in isoprenoid biosynthesis; isopentenyl diphosphate biosynthesis via DXP pathway; isopentenyl diphosphate from 1-deoxy-D-xylulose 5-phosphate: step 2/6. Functionally, catalyzes the formation of 4-diphosphocytidyl-2-C-methyl-D-erythritol from CTP and 2-C-methyl-D-erythritol 4-phosphate (MEP). This Burkholderia thailandensis (strain ATCC 700388 / DSM 13276 / CCUG 48851 / CIP 106301 / E264) protein is 2-C-methyl-D-erythritol 4-phosphate cytidylyltransferase.